Consider the following 505-residue polypeptide: Outer capsid protein VP5 (505 aa).

The segment at 1 to 42 is involved in membrane permeabilization; it reads MGKFTSFLKRAGNATKRALTSDSAKKMYKLAGKTLQRVVESE.

The protein belongs to the orbivirus VP5 family.

It is found in the virion. Functionally, VP5 protein is one of the two proteins (with VP2) which constitute the virus particle outer capsid. Acts as a membrane permeabilization protein that mediates release of viral particles from endosomal compartments into the cytoplasm. Permeabilization activity is probably negatively regulated by VP2 and is triggered by endosomal degradation of VP2 and exposure to low pH. The polypeptide is Outer capsid protein VP5 (Segment-6) (African horse sickness virus (AHSV)).